A 132-amino-acid polypeptide reads, in one-letter code: UPF0329 protein ECU07_0050/ECU09_2020 (132 aa).

It belongs to the UPF0329 family.

The sequence is that of UPF0329 protein ECU07_0050/ECU09_2020 from Encephalitozoon cuniculi (strain GB-M1) (Microsporidian parasite).